Consider the following 365-residue polypeptide: Alanine racemase (365 aa).

Residue K32 is the Proton acceptor; specific for D-alanine of the active site. K32 bears the N6-(pyridoxal phosphate)lysine mark. A substrate-binding site is contributed by R128. Y257 functions as the Proton acceptor; specific for L-alanine in the catalytic mechanism. Substrate is bound at residue M305.

It belongs to the alanine racemase family. Pyridoxal 5'-phosphate serves as cofactor.

It carries out the reaction L-alanine = D-alanine. It functions in the pathway amino-acid biosynthesis; D-alanine biosynthesis; D-alanine from L-alanine: step 1/1. Functionally, catalyzes the interconversion of L-alanine and D-alanine. May also act on other amino acids. This is Alanine racemase (alr) from Francisella tularensis subsp. novicida (strain U112).